We begin with the raw amino-acid sequence, 490 residues long: Betaine aldehyde dehydrogenase (490 aa).

Asparagine 93 provides a ligand contact to K(+). Residue 150 to 152 (GAW) participates in NAD(+) binding. Catalysis depends on lysine 162, which acts as the Charge relay system. 176–179 (KPSE) is an NAD(+) binding site. Valine 180 is a K(+) binding site. 230 to 233 (GTAT) is a binding site for NAD(+). Position 246 (leucine 246) interacts with K(+). The active-site Proton acceptor is glutamate 252. Positions 254, 286, and 387 each coordinate NAD(+). Cysteine 286 functions as the Nucleophile in the catalytic mechanism. Cysteine 286 carries the post-translational modification Cysteine sulfenic acid (-SOH). Lysine 457 and glycine 460 together coordinate K(+). The active-site Charge relay system is the glutamate 464.

The protein belongs to the aldehyde dehydrogenase family. In terms of assembly, dimer of dimers. Requires K(+) as cofactor.

The enzyme catalyses betaine aldehyde + NAD(+) + H2O = glycine betaine + NADH + 2 H(+). It participates in amine and polyamine biosynthesis; betaine biosynthesis via choline pathway; betaine from betaine aldehyde: step 1/1. Involved in the biosynthesis of the osmoprotectant glycine betaine. Catalyzes the irreversible oxidation of betaine aldehyde to the corresponding acid. The sequence is that of Betaine aldehyde dehydrogenase from Xanthomonas campestris pv. campestris (strain ATCC 33913 / DSM 3586 / NCPPB 528 / LMG 568 / P 25).